A 288-amino-acid chain; its full sequence is MASLRDIKNRINSTKKTRQITKAMQMVSAAKLNRAQEKAQSYEVYAKKMREVVGNIAQAGSDTSHPMLEERPVKKTGYILMTSDTGLAGGYNSSLLRDMMKTINERHASEDEYAIIVLGRIGRDLLRTRKQPIIQEMVEVPDQPTFNDVSGLAKSSVEMFADGVFDELYIWYNHFVSPMTQRVTEQKLLPLASVNEGDETSSTSLYEFEPSEQQILEAVLPRYAESLIYGALLDAKASEFGARMTAMSAATDNASALIDELTLSYNRARQAAITQEITEIVGGAAALE.

The protein belongs to the ATPase gamma chain family. F-type ATPases have 2 components, CF(1) - the catalytic core - and CF(0) - the membrane proton channel. CF(1) has five subunits: alpha(3), beta(3), gamma(1), delta(1), epsilon(1). CF(0) has three main subunits: a, b and c.

The protein localises to the cell membrane. Functionally, produces ATP from ADP in the presence of a proton gradient across the membrane. The gamma chain is believed to be important in regulating ATPase activity and the flow of protons through the CF(0) complex. In Shouchella clausii (strain KSM-K16) (Alkalihalobacillus clausii), this protein is ATP synthase gamma chain.